A 271-amino-acid chain; its full sequence is Putative phosphoenolpyruvate synthase regulatory protein (271 aa).

ADP is bound at residue 151–158; that stretch reads GVSRSGKT.

This sequence belongs to the pyruvate, phosphate/water dikinase regulatory protein family. PSRP subfamily.

The enzyme catalyses [pyruvate, water dikinase] + ADP = [pyruvate, water dikinase]-phosphate + AMP + H(+). It catalyses the reaction [pyruvate, water dikinase]-phosphate + phosphate + H(+) = [pyruvate, water dikinase] + diphosphate. In terms of biological role, bifunctional serine/threonine kinase and phosphorylase involved in the regulation of the phosphoenolpyruvate synthase (PEPS) by catalyzing its phosphorylation/dephosphorylation. This Burkholderia ambifaria (strain MC40-6) protein is Putative phosphoenolpyruvate synthase regulatory protein.